Consider the following 133-residue polypeptide: Ribonuclease P protein component (133 aa).

The protein belongs to the RnpA family. Consists of a catalytic RNA component (M1 or rnpB) and a protein subunit.

The enzyme catalyses Endonucleolytic cleavage of RNA, removing 5'-extranucleotides from tRNA precursor.. Functionally, RNaseP catalyzes the removal of the 5'-leader sequence from pre-tRNA to produce the mature 5'-terminus. It can also cleave other RNA substrates such as 4.5S RNA. The protein component plays an auxiliary but essential role in vivo by binding to the 5'-leader sequence and broadening the substrate specificity of the ribozyme. The chain is Ribonuclease P protein component from Bartonella quintana (strain Toulouse) (Rochalimaea quintana).